The chain runs to 144 residues: Ribosomal RNA large subunit methyltransferase H (144 aa).

Residues L68, G96, and 112-117 (FSKLTF) each bind S-adenosyl-L-methionine.

This sequence belongs to the RNA methyltransferase RlmH family. In terms of assembly, homodimer.

It localises to the cytoplasm. It carries out the reaction pseudouridine(1915) in 23S rRNA + S-adenosyl-L-methionine = N(3)-methylpseudouridine(1915) in 23S rRNA + S-adenosyl-L-homocysteine + H(+). Its function is as follows. Specifically methylates the pseudouridine at position 1915 (m3Psi1915) in 23S rRNA. This Mycoplasmopsis synoviae (strain 53) (Mycoplasma synoviae) protein is Ribosomal RNA large subunit methyltransferase H.